The sequence spans 332 residues: L-lactate dehydrogenase A chain (332 aa).

K5 is subject to N6-acetyllysine; alternate. K5 bears the N6-succinyllysine; alternate mark. Residue K14 is modified to N6-acetyllysine. At T18 the chain carries Phosphothreonine. 29–57 (GAVGMACAISILMKDLADELALVDVIEDK) serves as a coordination point for NAD(+). Position 57 is an N6-acetyllysine; alternate (K57). K57 is covalently cross-linked (Glycyl lysine isopeptide (Lys-Gly) (interchain with G-Cter in SUMO2); alternate). K81 carries the post-translational modification N6-acetyllysine. R99 lines the NAD(+) pocket. R106 is a substrate binding site. The residue at position 118 (K118) is an N6-acetyllysine; alternate. Position 118 is an N6-succinyllysine; alternate (K118). K126 is modified (N6-acetyllysine). N138 is a binding site for NAD(+). The substrate site is built by N138 and R169. H193 (proton acceptor) is an active-site residue. Residue K232 is modified to N6-acetyllysine. A Phosphotyrosine modification is found at Y239. N6-acetyllysine is present on K243. Position 248 (T248) interacts with substrate. 2 positions are modified to phosphothreonine: T309 and T322.

The protein belongs to the LDH/MDH superfamily. LDH family. In terms of assembly, homotetramer. Interacts with PTEN upstream reading frame protein MP31. Post-translationally, ISGylated.

The protein localises to the cytoplasm. It catalyses the reaction (S)-lactate + NAD(+) = pyruvate + NADH + H(+). Its pathway is fermentation; pyruvate fermentation to lactate; (S)-lactate from pyruvate: step 1/1. Its function is as follows. Interconverts simultaneously and stereospecifically pyruvate and lactate with concomitant interconversion of NADH and NAD(+). In Monodelphis domestica (Gray short-tailed opossum), this protein is L-lactate dehydrogenase A chain (LDHA).